Here is a 108-residue protein sequence, read N- to C-terminus: Evasin P1156 (108 aa).

Residues 1 to 28 form the signal peptide; the sequence is MEVKTYAFLQIAVFIFLGMQIFASLTDA. Intrachain disulfides connect C41–C63, C45–C65, and C56–C76. N44 is a glycosylation site (N-linked (GlcNAc...) asparagine). A disordered region spans residues 89–108; it reads NPSDSEIEAAKPKRSDTLSH. A compositionally biased stretch (basic and acidic residues) spans 96-108; the sequence is EAAKPKRSDTLSH.

Its subcellular location is the secreted. Its function is as follows. Salivary chemokine-binding protein which has chemokine-neutralizing activity and binds to host chemokines CXCL1, CXCL2, CXCL3, CXCL5, CXCL6 and CXCL8. This is Evasin P1156 from Ixodes ricinus (Common tick).